The primary structure comprises 209 residues: Large ribosomal subunit protein uL4 (209 aa).

Positions 45-80 (RQGTHKAKERSELSGSTRKLIRQKGSGGARRGDINS) are disordered.

The protein belongs to the universal ribosomal protein uL4 family. In terms of assembly, part of the 50S ribosomal subunit.

In terms of biological role, one of the primary rRNA binding proteins, this protein initially binds near the 5'-end of the 23S rRNA. It is important during the early stages of 50S assembly. It makes multiple contacts with different domains of the 23S rRNA in the assembled 50S subunit and ribosome. Its function is as follows. Forms part of the polypeptide exit tunnel. The polypeptide is Large ribosomal subunit protein uL4 (Porphyromonas gingivalis (strain ATCC BAA-308 / W83)).